Reading from the N-terminus, the 147-residue chain is Flagellar assembly factor FliW (147 aa).

Belongs to the FliW family. Interacts with translational regulator CsrA and flagellin(s).

The protein resides in the cytoplasm. Its function is as follows. Acts as an anti-CsrA protein, binds CsrA and prevents it from repressing translation of its target genes, one of which is flagellin. Binds to flagellin and participates in the assembly of the flagellum. This Treponema denticola (strain ATCC 35405 / DSM 14222 / CIP 103919 / JCM 8153 / KCTC 15104) protein is Flagellar assembly factor FliW.